Reading from the N-terminus, the 307-residue chain is sn-1-specific diacylglycerol lipase ABHD11 (307 aa).

A mitochondrion-targeting transit peptide spans 1-34 (MLRWARAWRVPRGVLGASSPRRLAVPVTFCSSRS). Residue Lys-79 is modified to N6-succinyllysine. Residue Ser-133 is the Charge relay system of the active site. Residue Lys-196 is modified to N6-succinyllysine. Residues Asp-229 and His-288 each act as charge relay system in the active site.

Belongs to the AB hydrolase superfamily. As to quaternary structure, interacts with OGDH and DLST; this interaction maintains the functional lipoylation of the 2-oxoglutarate dehydrogenase complex. Phosphorylated. In terms of tissue distribution, expressed in white adipose tissues.

The protein localises to the mitochondrion. Its subcellular location is the mitochondrion matrix. The enzyme catalyses 1-octadecanoyl-2-(5Z,8Z,11Z,14Z-eicosatetraenoyl)-sn-glycerol + H2O = 2-(5Z,8Z,11Z,14Z-eicosatetraenoyl)-glycerol + octadecanoate + H(+). It catalyses the reaction a 1,2-diacyl-sn-glycerol + H2O = a 2-acylglycerol + a fatty acid + H(+). The catalysed reaction is a 1,3-diacyl-sn-glycerol + H2O = a 1-acyl-sn-glycerol + a fatty acid + H(+). It carries out the reaction 1-octadecanoyl-2-(9Z-octadecenoyl)-sn-glycerol + H2O = 2-(9Z-octadecenoyl)-glycerol + octadecanoate + H(+). The enzyme catalyses 1-octadecanoyl-2-(4Z,7Z,10Z,13Z,16Z,19Z-docosahexaenoyl)-sn-glycerol + H2O = 2-(4Z,7Z,10Z,13Z,16Z,19Z-docosahexaenoyl)-glycerol + octadecanoate + H(+). It catalyses the reaction 1,2-didecanoylglycerol + H2O = decanoylglycerol + decanoate + H(+). Catalyzes the hydrolysis of diacylglycerol in vitro and may function as a key regulator in lipid metabolism, namely by regulating the intracellular levels of diacylglycerol. 1,2-diacyl-sn-glycerols are the preferred substrate over 1,3-diacyl-sn-glycerols. The enzyme hydrolyzes stearate in preference to palmitate from the sn-1 position of 1,2-diacyl-sn-glycerols. Maintains the functional lipoylation of the 2-oxoglutarate dehydrogenase complex (OGDHc) through its interaction with the OGDHc by preventing the formation of lipoyl adducts. In addition, is also required for the expansion and differentiation of embryonic stem cells (ESCs). In Mus musculus (Mouse), this protein is sn-1-specific diacylglycerol lipase ABHD11.